The primary structure comprises 109 residues: Flagellar hook-basal body complex protein FliE (109 aa).

The disordered stretch occupies residues 1 to 38 (MQAIHNDKSLLSPFSELNTDNRTKREESGNAFKEQKGG). Positions 19–38 (TDNRTKREESGNAFKEQKGG) are enriched in basic and acidic residues.

This sequence belongs to the FliE family.

The protein localises to the bacterial flagellum basal body. In Helicobacter pylori (strain G27), this protein is Flagellar hook-basal body complex protein FliE.